The chain runs to 249 residues: Carbohydrate deacetylase (249 aa).

Residues histidine 60 and histidine 125 each coordinate Mg(2+).

It belongs to the YdjC deacetylase family. In terms of assembly, homodimer. The cofactor is Mg(2+).

Its function is as follows. Probably catalyzes the deacetylation of acetylated carbohydrates an important step in the degradation of oligosaccharides. This Thermoanaerobacter pseudethanolicus (strain ATCC 33223 / 39E) (Clostridium thermohydrosulfuricum) protein is Carbohydrate deacetylase.